The following is a 168-amino-acid chain: G/U mismatch-specific DNA glycosylase (168 aa).

It belongs to the uracil-DNA glycosylase (UDG) superfamily. TDG/mug family. Binds DNA as a monomer.

It is found in the cytoplasm. The catalysed reaction is Specifically hydrolyzes mismatched double-stranded DNA and polynucleotides, releasing free uracil.. In terms of biological role, excises ethenocytosine and uracil, which can arise by alkylation or deamination of cytosine, respectively, from the corresponding mispairs with guanine in ds-DNA. It is capable of hydrolyzing the carbon-nitrogen bond between the sugar-phosphate backbone of the DNA and the mispaired base. The complementary strand guanine functions in substrate recognition. Required for DNA damage lesion repair in stationary-phase cells. This chain is G/U mismatch-specific DNA glycosylase, found in Cronobacter sakazakii (strain ATCC BAA-894) (Enterobacter sakazakii).